Reading from the N-terminus, the 151-residue chain is US8.5 protein (151 aa).

The disordered stretch occupies residues 27–107; that stretch reads SSQPLDPEGP…APSPHPRPPG (81 aa). Residues 80 to 91 show a composition bias toward basic and acidic residues; it reads SDERGPPRHDRP.

It is found in the host nucleus. It localises to the host nucleolus. The sequence is that of US8.5 protein (US8.5) from Human herpesvirus 1 (strain F) (HHV-1).